A 91-amino-acid polypeptide reads, in one-letter code: uncharacterized protein (91 aa).

An N-terminal signal peptide occupies residues 1–18; it reads MKVNLILFSLFLLVSIMA. C19 carries the N-palmitoyl cysteine lipid modification. C19 carries the S-diacylglycerol cysteine lipid modification.

It is found in the cell membrane. This is an uncharacterized protein from Escherichia coli (strain K12).